The sequence spans 301 residues: Porphobilinogen deaminase (301 aa).

Cysteine 240 is modified (S-(dipyrrolylmethanemethyl)cysteine).

This sequence belongs to the HMBS family. As to quaternary structure, monomer. It depends on dipyrromethane as a cofactor.

It carries out the reaction 4 porphobilinogen + H2O = hydroxymethylbilane + 4 NH4(+). It functions in the pathway porphyrin-containing compound metabolism; protoporphyrin-IX biosynthesis; coproporphyrinogen-III from 5-aminolevulinate: step 2/4. Tetrapolymerization of the monopyrrole PBG into the hydroxymethylbilane pre-uroporphyrinogen in several discrete steps. The chain is Porphobilinogen deaminase from Clostridioides difficile (strain 630) (Peptoclostridium difficile).